The primary structure comprises 512 residues: Chitin synthase regulatory factor 2 (512 aa).

6 Sel1-like repeats span residues 224 to 260 (SEAL…DLNH), 261 to 296 (VQAA…SGQH), 297 to 333 (VGAM…LEAD), 337 to 377 (PQAL…KYGL), 378 to 414 (KDAQ…RKRN), and 415 to 452 (PEAM…YKNH). A Cysteine methyl ester modification is found at Cys509. Residue Cys509 is the site of S-farnesyl cysteine attachment. The propeptide at 510 to 512 (IIS) is removed in mature form.

The protein resides in the membrane. Involved in chitin biosynthesis. This Schizosaccharomyces pombe (strain 972 / ATCC 24843) (Fission yeast) protein is Chitin synthase regulatory factor 2 (chr2).